A 526-amino-acid chain; its full sequence is Peptide chain release factor 3 (526 aa).

The tr-type G domain occupies 9 to 277 (DKRRTFAIIS…GIVEWAPRPQ (269 aa)). Residues 18–25 (SHPDAGKT), 86–90 (DTPGH), and 140–143 (NKLD) contribute to the GTP site.

Belongs to the TRAFAC class translation factor GTPase superfamily. Classic translation factor GTPase family. PrfC subfamily.

It is found in the cytoplasm. Functionally, increases the formation of ribosomal termination complexes and stimulates activities of RF-1 and RF-2. It binds guanine nucleotides and has strong preference for UGA stop codons. It may interact directly with the ribosome. The stimulation of RF-1 and RF-2 is significantly reduced by GTP and GDP, but not by GMP. The polypeptide is Peptide chain release factor 3 (Shewanella loihica (strain ATCC BAA-1088 / PV-4)).